A 242-amino-acid chain; its full sequence is Tryptophan synthase alpha chain (242 aa).

Residues glutamate 31 and aspartate 42 each act as proton acceptor in the active site.

Belongs to the TrpA family. Tetramer of two alpha and two beta chains.

The catalysed reaction is (1S,2R)-1-C-(indol-3-yl)glycerol 3-phosphate + L-serine = D-glyceraldehyde 3-phosphate + L-tryptophan + H2O. Its pathway is amino-acid biosynthesis; L-tryptophan biosynthesis; L-tryptophan from chorismate: step 5/5. The alpha subunit is responsible for the aldol cleavage of indoleglycerol phosphate to indole and glyceraldehyde 3-phosphate. The polypeptide is Tryptophan synthase alpha chain (Staphylococcus aureus (strain Mu3 / ATCC 700698)).